A 116-amino-acid chain; its full sequence is Protein AV2 (116 aa).

This sequence belongs to the geminiviridae protein AV2/V2 family. Interacts with host SGS3.

It is found in the host cytoplasm. It localises to the host perinuclear region. Through its interaction with host SGS3, acts as a suppressor of RNA-mediated gene silencing, also known as post-transcriptional gene silencing (PTGS), a mechanism of plant viral defense that limits the accumulation of viral RNAs. The polypeptide is Protein AV2 (Mungbean yellow mosaic virus (strain Vigna) (MYMV)).